A 101-amino-acid polypeptide reads, in one-letter code: Acylphosphatase (101 aa).

The Acylphosphatase-like domain maps to arginine 13–tyrosine 101. Active-site residues include arginine 28 and asparagine 46.

The protein belongs to the acylphosphatase family.

The enzyme catalyses an acyl phosphate + H2O = a carboxylate + phosphate + H(+). The sequence is that of Acylphosphatase (acyP) from Aeropyrum pernix (strain ATCC 700893 / DSM 11879 / JCM 9820 / NBRC 100138 / K1).